We begin with the raw amino-acid sequence, 380 residues long: Apelin receptor (380 aa).

Topologically, residues Met-1–Leu-30 are extracellular. N-linked (GlcNAc...) asparagine glycosylation is present at Asn-15. Disulfide bonds link Cys-19–Cys-281 and Cys-102–Cys-181. A helical transmembrane segment spans residues Ile-31–Phe-54. Topologically, residues Arg-55–Ala-64 are cytoplasmic. The helical transmembrane segment at Asp-65 to Ala-86 threads the bilayer. Over Thr-87–Thr-99 the chain is Extracellular. The chain crosses the membrane as a helical span at residues Phe-100–Phe-125. At Asp-126–Gly-146 the chain is on the cytoplasmic side. Residues Ala-147–Val-164 traverse the membrane as a helical segment. Over Met-165–Glu-198 the chain is Extracellular. Asn-175 is a glycosylation site (N-linked (GlcNAc...) asparagine). The chain crosses the membrane as a helical span at residues Val-199–Phe-223. The Cytoplasmic segment spans residues Ile-224–Leu-246. A helical transmembrane segment spans residues Leu-247–Leu-270. Residues Tyr-271–Asn-289 lie on the Extracellular side of the membrane. The chain crosses the membrane as a helical span at residues Val-290–Phe-312. Residues Asp-313–Asp-380 are Cytoplasmic-facing. The span at Lys-342–Ser-351 shows a compositional bias: low complexity. The disordered stretch occupies residues Lys-342–Asp-380. Over residues Pro-371 to Asp-380 the composition is skewed to polar residues.

It belongs to the G-protein coupled receptor 1 family. In terms of assembly, homodimer; dimerization inhibits APLNR-mediated G protein and beta-arrestin signaling pathways compared to monomeric APLNR.

Its subcellular location is the cell membrane. G protein-coupled receptor for peptide hormones apelin (APLN) and apelin receptor early endogenous ligand (APELA/ELA), that plays a role in the regulation of normal cardiovascular function and fluid homeostasis. When acting as apelin receptor, activates both G(i) protein pathway that inhibits adenylate cyclase activity, and the beta-arrestin pathway that promotes internalization of the receptor. APLNR/APJ also functions as mechanoreceptor that is activated by pathological stimuli in a G-protein-independent fashion to induce beta-arrestin signaling, hence eliciting cardiac hypertrophy. However, the presence of apelin ligand blunts cardiac hypertrophic induction from APLNR/APJ on response to pathological stimuli. Plays a key role in early development such as gastrulation, blood vessels formation and heart morphogenesis by acting as a APELA receptor. May promote angioblast migration toward the embryonic midline, i.e. the position of the future vessel formation, during vasculogenesis. Promotes sinus venosus (SV)-derived endothelial cells migration into the developing heart to promote coronary blood vessel development. Also plays a role in various processes in adults such as regulation of blood vessel formation, blood pressure, heart contractility and heart failure. Functionally, (Microbial infection) Alternative coreceptor with CD4 for HIV-1 infection; may be involved in the development of AIDS dementia. This Macaca mulatta (Rhesus macaque) protein is Apelin receptor (APLNR).